A 151-amino-acid polypeptide reads, in one-letter code: Large ribosomal subunit protein bL9 (151 aa).

It belongs to the bacterial ribosomal protein bL9 family.

Binds to the 23S rRNA. In Thermosipho africanus (strain TCF52B), this protein is Large ribosomal subunit protein bL9.